A 105-amino-acid chain; its full sequence is Fluoride-specific ion channel FluC (105 aa).

Transmembrane regions (helical) follow at residues 14-34 (FPLPILTVNVLGSFLMGVFVV), 44-64 (LSPLVMTGLLGGFTTFSAFSL), and 79-99 (ALYVALSVGLSIAGLMAGLWL). Na(+)-binding residues include Gly54 and Thr57.

Belongs to the fluoride channel Fluc/FEX (TC 1.A.43) family.

The protein resides in the cell inner membrane. It carries out the reaction fluoride(in) = fluoride(out). Na(+) is not transported, but it plays an essential structural role and its presence is essential for fluoride channel function. In terms of biological role, fluoride-specific ion channel. Important for reducing fluoride concentration in the cell, thus reducing its toxicity. This is Fluoride-specific ion channel FluC from Jannaschia sp. (strain CCS1).